A 78-amino-acid chain; its full sequence is Large ribosomal subunit protein bL28 (78 aa).

Belongs to the bacterial ribosomal protein bL28 family.

The sequence is that of Large ribosomal subunit protein bL28 from Pseudomonas aeruginosa (strain LESB58).